Here is a 967-residue protein sequence, read N- to C-terminus: A disintegrin and metalloproteinase with thrombospondin motifs 1 (967 aa).

Disordered stretches follow at residues 1–27 (MQRA…APGS) and 192–250 (GDVG…SIRK). Residues 1-49 (MQRAVPEGFGRRKLGSDMGNAERAPGSRSFGPVPTLLLLAAALLAVSDA) form the signal peptide. The propeptide occupies 50–252 (LGRPSEEDEE…TGTGSIRKKR (203 aa)). The Cysteine switch motif lies at 196-203 (GTCGVVDD). Zn(2+) is bound at residue Cys198. A compositionally biased stretch (basic and acidic residues) spans 203 to 212 (DEPRPTGKAE). Acidic residues predominate over residues 213–226 (TEDEDEGTEGEDEG). The region spanning 258-467 (RYVETMLVAD…GHGECLMDKP (210 aa)) is the Peptidase M12B domain. 3 residues coordinate Ca(2+): Glu261, Asp344, and Asp351. Cystine bridges form between Cys333–Cys385, Cys362–Cys367, Cys379–Cys462, and Cys417–Cys446. His401 is a Zn(2+) binding site. Glu402 is a catalytic residue. Zn(2+) contacts are provided by His405 and His411. Ca(2+) is bound by residues Cys462 and Asp465. The 84-residue stretch at 476 to 559 (DLPGTSYDAN…DRKHFDTPFH (84 aa)) folds into the Disintegrin domain. 4 disulfide bridges follow: Cys488–Cys511, Cys499–Cys521, Cys506–Cys540, and Cys534–Cys545. An N-linked (GlcNAc...) asparagine glycan is attached at Asn547. One can recognise a TSP type-1 1 domain in the interval 559–614 (HGSWGMWGPWGDCSRTCGGGVQYTMRECDNPVPKNGGKYCEGKRVRYRSCNLEDCP). Disulfide bonds link Cys571–Cys608, Cys575–Cys613, and Cys586–Cys598. Asn720 and Asn764 each carry an N-linked (GlcNAc...) asparagine glycan. A spacer region spans residues 725-849 (KKISGSVTSA…YFVKKKKESF (125 aa)). TSP type-1 domains lie at 854 to 905 (TFSA…RPCA) and 908 to 967 (PCPQ…AECS).

The cofactor is Zn(2+). Post-translationally, the precursor is cleaved by a furin endopeptidase. Glycosylated. Can be O-fucosylated by POFUT2 on a serine or a threonine residue found within the consensus sequence C1-X(2)-(S/T)-C2-G of the TSP type-1 repeat domains where C1 and C2 are the first and second cysteine residue of the repeat, respectively. Fucosylated repeats can then be further glycosylated by the addition of a beta-1,3-glucose residue by the glucosyltransferase, B3GALTL. Fucosylation mediates the efficient secretion of ADAMTS family members. Can also be C-glycosylated with one or two mannose molecules on tryptophan residues within the consensus sequence W-X-X-W of the TPRs, and N-glycosylated. These other glycosylations can also facilitate secretion.

It localises to the secreted. The protein localises to the extracellular space. It is found in the extracellular matrix. Metalloprotease which cleaves aggrecan, a cartilage proteoglycan, at the '1938-Glu-|-Leu-1939' site (within the chondroitin sulfate attachment domain), and may be involved in its turnover. Also cleaves COMP. Has angiogenic inhibitor activity. May play a critical role in follicular rupture. This is A disintegrin and metalloproteinase with thrombospondin motifs 1 (ADAMTS1) from Homo sapiens (Human).